The chain runs to 237 residues: B3 domain-containing protein Os03g0184500 (237 aa).

Residues 137–228 (FVKPMLHSHV…TFKVHIIRAT (92 aa)) constitute a DNA-binding region (TF-B3).

Its subcellular location is the nucleus. The polypeptide is B3 domain-containing protein Os03g0184500 (Oryza sativa subsp. japonica (Rice)).